We begin with the raw amino-acid sequence, 426 residues long: Enolase (426 aa).

Gln163 is a (2R)-2-phosphoglycerate binding site. Glu205 (proton donor) is an active-site residue. Residues Asp242, Glu286, and Asp313 each contribute to the Mg(2+) site. Lys338, Arg367, Ser368, and Lys389 together coordinate (2R)-2-phosphoglycerate. Lys338 functions as the Proton acceptor in the catalytic mechanism.

Belongs to the enolase family. Requires Mg(2+) as cofactor.

The protein resides in the cytoplasm. It localises to the secreted. It is found in the cell surface. It catalyses the reaction (2R)-2-phosphoglycerate = phosphoenolpyruvate + H2O. It functions in the pathway carbohydrate degradation; glycolysis; pyruvate from D-glyceraldehyde 3-phosphate: step 4/5. Catalyzes the reversible conversion of 2-phosphoglycerate (2-PG) into phosphoenolpyruvate (PEP). It is essential for the degradation of carbohydrates via glycolysis. This chain is Enolase, found in Helicobacter pylori (strain HPAG1).